Reading from the N-terminus, the 239-residue chain is Uridylate kinase (239 aa).

12–15 (KLSG) lines the ATP pocket. Residue Gly-53 coordinates UMP. Residues Gly-54 and Arg-58 each contribute to the ATP site. UMP contacts are provided by residues Asp-73 and 135 to 142 (TGSPCFTT). ATP-binding residues include Thr-162, Tyr-168, and Asp-171.

It belongs to the UMP kinase family. As to quaternary structure, homohexamer.

It is found in the cytoplasm. It carries out the reaction UMP + ATP = UDP + ADP. It participates in pyrimidine metabolism; CTP biosynthesis via de novo pathway; UDP from UMP (UMPK route): step 1/1. Its activity is regulated as follows. Inhibited by UTP. Catalyzes the reversible phosphorylation of UMP to UDP. This Ruthia magnifica subsp. Calyptogena magnifica protein is Uridylate kinase.